We begin with the raw amino-acid sequence, 439 residues long: GTPase Obg (439 aa).

Residues 3–162 form the Obg domain; the sequence is GEFYDSARIF…REIELELKLL (160 aa). The region spanning 163–333 is the OBG-type G domain; sequence ADVGLIGFPN…LLQRVAERLR (171 aa). Residues 169–176, 194–198, 215–218, 285–288, and 314–316 contribute to the GTP site; these read GFPNAGKS, FTTLQ, DIPG, NKAD, and SAA. Mg(2+) is bound by residues Ser-176 and Thr-196. The OCT domain occupies 351–428; the sequence is VPEVDERLYT…IEQAAFDWED (78 aa).

It belongs to the TRAFAC class OBG-HflX-like GTPase superfamily. OBG GTPase family. Monomer. The cofactor is Mg(2+).

It is found in the cytoplasm. In terms of biological role, an essential GTPase which binds GTP, GDP and possibly (p)ppGpp with moderate affinity, with high nucleotide exchange rates and a fairly low GTP hydrolysis rate. Plays a role in control of the cell cycle, stress response, ribosome biogenesis and in those bacteria that undergo differentiation, in morphogenesis control. In Roseiflexus castenholzii (strain DSM 13941 / HLO8), this protein is GTPase Obg.